A 362-amino-acid chain; its full sequence is DNA replication and repair protein RecF (362 aa).

30 to 37 (GPNGSGKT) is an ATP binding site.

It belongs to the RecF family.

It is found in the cytoplasm. In terms of biological role, the RecF protein is involved in DNA metabolism; it is required for DNA replication and normal SOS inducibility. RecF binds preferentially to single-stranded, linear DNA. It also seems to bind ATP. The sequence is that of DNA replication and repair protein RecF from Proteus mirabilis (strain HI4320).